A 96-amino-acid chain; its full sequence is Protein RnfH (96 aa).

The protein belongs to the UPF0125 (RnfH) family.

The protein is Protein RnfH of Shigella flexneri.